A 213-amino-acid chain; its full sequence is MTTNKSSLSYFTDALWINNQPLVAILGICSALAVTTTVTTALTMGLAVSFVTGFASFVVSLLRKITPESVRMIAQLIIISLFVILIDQFLKAFFFNISKTLSVFVGLIITNCIVMGRAESMARHISPIPAFLDGLGSGLGYGWVLVCISIIRELFGFGTILGFHIIPKIFYASAAHPDGYENLGLMVLAPSAFFLLGIMVWLVNIVRASKTKR.

Transmembrane regions (helical) follow at residues 14–34 (ALWI…ALAV), 42–62 (LTMG…VSLL), 77–97 (IIIS…FFNI), 101–121 (LSVF…AESM), 131–151 (FLDG…ISII), 154–174 (LFGF…YASA), and 183–203 (LGLM…VWLV).

It belongs to the NqrDE/RnfAE family. In terms of assembly, composed of six subunits; NqrA, NqrB, NqrC, NqrD, NqrE and NqrF.

It localises to the cell inner membrane. It carries out the reaction a ubiquinone + n Na(+)(in) + NADH + H(+) = a ubiquinol + n Na(+)(out) + NAD(+). NQR complex catalyzes the reduction of ubiquinone-1 to ubiquinol by two successive reactions, coupled with the transport of Na(+) ions from the cytoplasm to the periplasm. NqrA to NqrE are probably involved in the second step, the conversion of ubisemiquinone to ubiquinol. The sequence is that of Na(+)-translocating NADH-quinone reductase subunit D from Chlamydia muridarum (strain MoPn / Nigg).